A 214-amino-acid chain; its full sequence is Melanoregulin (214 aa).

Residues 162 to 172 (LSERYLFVVDR) carry the Cholesterol-binding sequence motif motif. Serine 213 carries the post-translational modification Phosphoserine.

Belongs to the melanoregulin family. In terms of assembly, identified in a complex with RILP and DCTN1; interacts directly with RILP, but does not interact directly with DCTN1. Interacts with PRPH2. Post-translationally, palmitoylated. Palmitoylation is required to maintain the protein at the melanosome membrane. Expressed in photoreceptor cells (at protein level).

It is found in the apical cell membrane. The protein resides in the melanosome membrane. Its subcellular location is the lysosome membrane. It localises to the cytoplasmic vesicle membrane. Its function is as follows. Probably functions as a cargo-recognition protein that couples cytoplasmic vesicles to the transport machinery. Plays a role in hair pigmentation, a process that involves shedding of melanosome-containing vesicles from melanocytes, followed by phagocytosis of the melanosome-containing vesicles by keratinocytes. Functions on melanosomes as receptor for RILP and the complex formed by RILP and DCTN1, and thereby contributes to retrograde melanosome transport from the cell periphery to the center. Overexpression causes accumulation of late endosomes and/or lysosomes at the microtubule organising center (MTOC) at the center of the cell. Probably binds cholesterol and requires the presence of cholesterol in membranes to function in microtubule-mediated retrograde organelle transport. Binds phosphatidylinositol 3-phosphate, phosphatidylinositol 4-phosphate, phosphatidylinositol 5-phosphate and phosphatidylinositol 3,5-bisphosphate, but not phosphatidylinositol 3,4-bisphosphate or phosphatidylinositol 4,5-bisphosphate. Required for normal phagosome clearing and normal activation of lysosomal enzymes in lysosomes from retinal pigment epithelium cells. Required for normal degradation of the lipofuscin component N-retinylidene-N-retinylethanolamine (A2E) in the eye. May function in membrane fusion and regulate the biogenesis of disk membranes of photoreceptor rod cells. This chain is Melanoregulin (MREG), found in Homo sapiens (Human).